The sequence spans 153 residues: Ribosome maturation factor RimP (153 aa).

The protein belongs to the RimP family.

The protein resides in the cytoplasm. In terms of biological role, required for maturation of 30S ribosomal subunits. This chain is Ribosome maturation factor RimP, found in Solibacter usitatus (strain Ellin6076).